The primary structure comprises 131 residues: Probable calcium-binding protein CML34 (131 aa).

4 consecutive EF-hand domains span residues 1–33 (MSAK…FSPY), 34–69 (FTQE…MLKE), 70–97 (VFVF…LGKK), and 98–131 (FTEE…IGDI). Ca(2+) contacts are provided by aspartate 11, asparagine 13, aspartate 15, lysine 17, glutamate 22, aspartate 47, aspartate 49, asparagine 51, glutamate 53, and glutamate 58. Ca(2+)-binding residues include aspartate 111, aspartate 113, aspartate 115, tyrosine 117, and glutamate 122.

In terms of biological role, potential calcium sensor. The protein is Probable calcium-binding protein CML34 (CML34) of Arabidopsis thaliana (Mouse-ear cress).